A 214-amino-acid polypeptide reads, in one-letter code: RNA-free ribonuclease P (214 aa).

The protein belongs to the HARP family.

It catalyses the reaction Endonucleolytic cleavage of RNA, removing 5'-extranucleotides from tRNA precursor.. RNA-free RNase P that catalyzes the removal of the 5'-leader sequence from pre-tRNA to produce the mature 5'-terminus. This is RNA-free ribonuclease P from Aeropyrum pernix (strain ATCC 700893 / DSM 11879 / JCM 9820 / NBRC 100138 / K1).